We begin with the raw amino-acid sequence, 301 residues long: tRNA dimethylallyltransferase 2 (301 aa).

11-18 (GATASGKT) contacts ATP. Position 13 to 18 (13 to 18 (TASGKT)) interacts with substrate. The tract at residues 36–39 (DSRQ) is interaction with substrate tRNA.

The protein belongs to the IPP transferase family. As to quaternary structure, monomer. The cofactor is Mg(2+).

The enzyme catalyses adenosine(37) in tRNA + dimethylallyl diphosphate = N(6)-dimethylallyladenosine(37) in tRNA + diphosphate. In terms of biological role, catalyzes the transfer of a dimethylallyl group onto the adenine at position 37 in tRNAs that read codons beginning with uridine, leading to the formation of N6-(dimethylallyl)adenosine (i(6)A). The polypeptide is tRNA dimethylallyltransferase 2 (Shewanella sediminis (strain HAW-EB3)).